The chain runs to 50 residues: U2-ctenitoxin-Pk1a (50 aa).

5 disulfides stabilise this stretch: C1/C15, C8/C21, C12/C47, C14/C31, and C23/C29.

Expressed by the venom gland.

The protein resides in the secreted. Functionally, insecticidal neurotoxin that reversibly inhibits the N-methyl-D-aspartate (NMDA)-subtype of ionotropic glutamate receptor (GRIN) and inhibits inactivation of insect sodium channels (Nav). In vivo, is highly toxic to insects. The protein is U2-ctenitoxin-Pk1a of Phoneutria keyserlingi (Brazilian wandering spider).